The chain runs to 108 residues: MFMAENRLQLQKGSAEETIERFYNRQGIETIEGFQQMFVTKTLNTEDTDEVKILTIWESEDSFNNWLNSDVFKEAHKNVRLKSDDDGQQSPILSNKVFKYDIGYHYQK.

An ABM domain is found at 2–93 (FMAENRLQLQ…DDDGQQSPIL (92 aa)). Residue Asn-6 coordinates Fe cation. Residues 21-28 (RFYNRQGI) and His-76 contribute to the heme site.

The protein belongs to the antibiotic biosynthesis monooxygenase family. Heme-degrading monooxygenase IsdG subfamily. As to quaternary structure, homodimer.

It localises to the cytoplasm. It catalyses the reaction heme b + 5 AH2 + 4 O2 + 2 H(+) = delta-staphylobilin + Fe(2+) + formaldehyde + 5 A + 4 H2O. The enzyme catalyses heme b + 5 AH2 + 4 O2 + 2 H(+) = beta-staphylobilin + Fe(2+) + formaldehyde + 5 A + 4 H2O. In terms of biological role, allows bacterial pathogens to use the host heme as an iron source. Catalyzes the oxidative degradation of the heme macrocyclic porphyrin ring to the oxo-bilirubin chromophore staphylobilin (a mixture of the linear tetrapyrroles 5-oxo-delta-bilirubin and 15-oxo-beta-bilirubin) in the presence of a suitable electron donor such as ascorbate or NADPH--cytochrome P450 reductase, with subsequent release of free iron. The polypeptide is Heme oxygenase (staphylobilin-producing) (isdI) (Staphylococcus aureus (strain Mu3 / ATCC 700698)).